A 392-amino-acid chain; its full sequence is Chalcone synthase B (392 aa).

The active site involves Cys167.

It belongs to the thiolase-like superfamily. Chalcone/stilbene synthases family. In terms of tissue distribution, expressed at low level in seedlings after illumination with UV light. No expression in flowers or tissue culture.

The catalysed reaction is (E)-4-coumaroyl-CoA + 3 malonyl-CoA + 3 H(+) = 2',4,4',6'-tetrahydroxychalcone + 3 CO2 + 4 CoA. It participates in secondary metabolite biosynthesis; flavonoid biosynthesis. The primary product of this enzyme is 4,2',4',6'-tetrahydroxychalcone (also termed naringenin-chalcone or chalcone) which can under specific conditions spontaneously isomerize into naringenin. This is Chalcone synthase B (CHSB) from Petunia hybrida (Petunia).